Reading from the N-terminus, the 477-residue chain is Ribulose bisphosphate carboxylase large chain (477 aa).

A propeptide spanning residues 1 to 2 (MS) is cleaved from the precursor. N-acetylproline is present on proline 3. Position 14 is an N6,N6,N6-trimethyllysine (lysine 14). Substrate-binding residues include asparagine 123 and threonine 173. Residue lysine 175 is the Proton acceptor of the active site. Lysine 177 is a binding site for substrate. Mg(2+)-binding residues include lysine 201, aspartate 203, and glutamate 204. N6-carboxylysine is present on lysine 201. The Proton acceptor role is filled by histidine 294. Substrate is bound by residues arginine 295, histidine 327, and serine 379.

Belongs to the RuBisCO large chain family. Type I subfamily. As to quaternary structure, heterohexadecamer of 8 large chains and 8 small chains; disulfide-linked. The disulfide link is formed within the large subunit homodimers. It depends on Mg(2+) as a cofactor. In terms of processing, the disulfide bond which can form in the large chain dimeric partners within the hexadecamer appears to be associated with oxidative stress and protein turnover.

It localises to the plastid. It is found in the chloroplast. The catalysed reaction is 2 (2R)-3-phosphoglycerate + 2 H(+) = D-ribulose 1,5-bisphosphate + CO2 + H2O. It catalyses the reaction D-ribulose 1,5-bisphosphate + O2 = 2-phosphoglycolate + (2R)-3-phosphoglycerate + 2 H(+). Its function is as follows. RuBisCO catalyzes two reactions: the carboxylation of D-ribulose 1,5-bisphosphate, the primary event in carbon dioxide fixation, as well as the oxidative fragmentation of the pentose substrate in the photorespiration process. Both reactions occur simultaneously and in competition at the same active site. This chain is Ribulose bisphosphate carboxylase large chain, found in Agrostis stolonifera (Creeping bentgrass).